Here is a 308-residue protein sequence, read N- to C-terminus: Eugenol synthase 1 (308 aa).

Residues 13–16, 35–45, R36, 86–88, 111–113, K133, and 153–155 contribute to the NADP(+) site; these read TGYI, VRESTVSDPAK, QMQ, SEF, and NCF. K133 acts as the Proton donor/acceptor in catalysis.

The protein belongs to the NmrA-type oxidoreductase family. As to expression, in flowers, mostly expressed in limbs, and, to a lower extent, in tubes.

It catalyses the reaction eugenol + a carboxylate + NADP(+) = a coniferyl ester + NADPH. The enzyme catalyses eugenol + acetate + NADP(+) = (E)-coniferyl acetate + NADPH. It functions in the pathway aromatic compound metabolism; phenylpropanoid biosynthesis. Its function is as follows. Involved in the biosynthesis of the floral volatile eugenol. Catalyzes the synthesis of the phenylpropene eugenol from coniferyl acetate. Phenylpropenes are produced by plants as defense compounds with antimicrobial and antianimal properties, or as floral attractants of pollinators. The protein is Eugenol synthase 1 of Petunia hybrida (Petunia).